The chain runs to 225 residues: UPF0758 protein BAV2405 (225 aa).

One can recognise an MPN domain in the interval 103–225; the sequence is AMKHPEEVRR…ALSMAERGLI (123 aa). Positions 174, 176, and 187 each coordinate Zn(2+). Positions 174 to 187 match the JAMM motif motif; sequence HNHPSGNPQPSAAD.

The protein belongs to the UPF0758 family.

The chain is UPF0758 protein BAV2405 from Bordetella avium (strain 197N).